The following is a 516-amino-acid chain: L-amino-acid oxidase (516 aa).

Residues 1–18 (MNVFFMFSLLFLAALGSC) form the signal peptide. A disulfide bond links C28 and C189. FAD is bound by residues 61–62 (MA), 81–82 (EA), R89, and 103–106 (GPMR). Residues R106 and H239 each coordinate substrate. V279 contributes to the FAD binding site. Residues C349 and C430 are joined by a disulfide bond. N379 carries N-linked (GlcNAc...) asparagine glycosylation. Substrate is bound at residue Y390. Residues E475 and 482-487 (GWIDST) each bind FAD. Residue 482–483 (GW) coordinates substrate.

Belongs to the flavin monoamine oxidase family. FIG1 subfamily. As to quaternary structure, homodimer; non-covalently linked. Requires FAD as cofactor. As to expression, expressed by the venom gland.

The protein localises to the secreted. It carries out the reaction an L-alpha-amino acid + O2 + H2O = a 2-oxocarboxylate + H2O2 + NH4(+). Functionally, catalyzes an oxidative deamination of predominantly hydrophobic and aromatic L-amino acids, thus producing hydrogen peroxide that may contribute to the diverse toxic effects of this enzyme. Exhibits diverse biological activities, such as hemolysis, edema, hemorrhage, apoptosis, antibacterial and antiparasitic activities, as well as regulation of platelet aggregation. Effects of snake L-amino oxidases on platelets are controversial, since they either induce aggregation or inhibit agonist-induced aggregation. These different effects are probably due to different experimental conditions. The protein is L-amino-acid oxidase of Crotalus adamanteus (Eastern diamondback rattlesnake).